The following is a 495-amino-acid chain: Flagellin (495 aa).

This sequence belongs to the bacterial flagellin family.

Its subcellular location is the secreted. The protein resides in the bacterial flagellum. Its function is as follows. Flagellin is the subunit protein which polymerizes to form the filaments of bacterial flagella. The chain is Flagellin (fliC) from Salmonella paratyphi A (strain ATCC 9150 / SARB42).